A 299-amino-acid polypeptide reads, in one-letter code: Oxygen-dependent coproporphyrinogen-III oxidase (299 aa).

Ser-92 is a substrate binding site. Positions 96 and 106 each coordinate Mn(2+). His-106 serves as the catalytic Proton donor. Substrate is bound at residue 108 to 110 (NVR). Mn(2+) contacts are provided by His-145 and His-175. Positions 240-275 (YVEFNLVWDRGTLFGLQTGGRTESILMSMPPLVRWE) are important for dimerization. A substrate-binding site is contributed by 258-260 (GGR).

The protein belongs to the aerobic coproporphyrinogen-III oxidase family. In terms of assembly, homodimer. It depends on Mn(2+) as a cofactor.

Its subcellular location is the cytoplasm. The enzyme catalyses coproporphyrinogen III + O2 + 2 H(+) = protoporphyrinogen IX + 2 CO2 + 2 H2O. Its pathway is porphyrin-containing compound metabolism; protoporphyrin-IX biosynthesis; protoporphyrinogen-IX from coproporphyrinogen-III (O2 route): step 1/1. In terms of biological role, involved in the heme biosynthesis. Catalyzes the aerobic oxidative decarboxylation of propionate groups of rings A and B of coproporphyrinogen-III to yield the vinyl groups in protoporphyrinogen-IX. This chain is Oxygen-dependent coproporphyrinogen-III oxidase, found in Escherichia coli (strain SE11).